Consider the following 266-residue polypeptide: Electron transfer flavoprotein subunit beta (266 aa).

It belongs to the ETF beta-subunit/FixA family. As to quaternary structure, heterodimer of an alpha and a beta subunit. Requires FAD as cofactor. AMP serves as cofactor.

Its function is as follows. The electron transfer flavoprotein serves as a specific electron acceptor for other dehydrogenases. It transfers the electrons to the main respiratory chain via ETF-ubiquinone oxidoreductase (ETF dehydrogenase). The sequence is that of Electron transfer flavoprotein subunit beta (etfB) from Mycobacterium leprae (strain TN).